The sequence spans 225 residues: 7-carboxy-7-deazaguanine synthase (225 aa).

Substrate contacts are provided by residues 14–16 (LQG) and R29. In terms of domain architecture, Radical SAM core spans 20–225 (HFGKSAFFIR…LQTHKWLGVL (206 aa)). 3 residues coordinate [4Fe-4S] cluster: C33, C37, and C40. Mg(2+) is bound at residue T42. T77 contacts substrate. Residues G79 and 127–129 (SPK) contribute to the S-adenosyl-L-methionine site.

Belongs to the radical SAM superfamily. 7-carboxy-7-deazaguanine synthase family. Homodimer. The cofactor is [4Fe-4S] cluster. Requires S-adenosyl-L-methionine as cofactor. Mg(2+) serves as cofactor.

It carries out the reaction 6-carboxy-5,6,7,8-tetrahydropterin + H(+) = 7-carboxy-7-deazaguanine + NH4(+). The protein operates within purine metabolism; 7-cyano-7-deazaguanine biosynthesis. Catalyzes the complex heterocyclic radical-mediated conversion of 6-carboxy-5,6,7,8-tetrahydropterin (CPH4) to 7-carboxy-7-deazaguanine (CDG), a step common to the biosynthetic pathways of all 7-deazapurine-containing compounds. The protein is 7-carboxy-7-deazaguanine synthase of Prochlorococcus marinus (strain SARG / CCMP1375 / SS120).